The chain runs to 274 residues: Ribulose-phosphate 3-epimerase, chloroplastic (274 aa).

The N-terminal 39 residues, 1–39 (MASPSSSSSLCSTFASPRAASLGRRLAFSSPRKAFRVRA), are a transit peptide targeting the chloroplast. A substrate-binding site is contributed by S56. A divalent metal cation contacts are provided by H81, D83, and H114. D83 serves as the catalytic Proton acceptor. Substrate contacts are provided by residues H114, 192 to 195 (GFGG), 225 to 227 (DGG), and 247 to 248 (GS). D225 is a binding site for a divalent metal cation. The active-site Proton donor is the D225.

This sequence belongs to the ribulose-phosphate 3-epimerase family. Homooctamer. Co(2+) serves as cofactor. Fe(2+) is required as a cofactor. The cofactor is Mn(2+). It depends on Zn(2+) as a cofactor.

The protein resides in the plastid. The protein localises to the chloroplast thylakoid membrane. It carries out the reaction D-ribulose 5-phosphate = D-xylulose 5-phosphate. It functions in the pathway carbohydrate biosynthesis; Calvin cycle. Its function is as follows. Catalyzes the reversible epimerization of D-ribulose 5-phosphate to D-xylulose 5-phosphate. In Oryza sativa subsp. japonica (Rice), this protein is Ribulose-phosphate 3-epimerase, chloroplastic (RPE).